The following is a 73-amino-acid chain: Putative defensin-like protein 277 (73 aa).

The signal sequence occupies residues 1-24 (MSAQKIYLASLLLFICLVFPQSTA). Cystine bridges form between Cys27/Cys64, Cys33/Cys52, Cys39/Cys62, and Cys43/Cys63.

This sequence belongs to the DEFL family.

Its subcellular location is the secreted. This Arabidopsis thaliana (Mouse-ear cress) protein is Putative defensin-like protein 277.